The sequence spans 95 residues: Aspartyl/glutamyl-tRNA(Asn/Gln) amidotransferase subunit C (95 aa).

The protein belongs to the GatC family. Heterotrimer of A, B and C subunits.

The catalysed reaction is L-glutamyl-tRNA(Gln) + L-glutamine + ATP + H2O = L-glutaminyl-tRNA(Gln) + L-glutamate + ADP + phosphate + H(+). It carries out the reaction L-aspartyl-tRNA(Asn) + L-glutamine + ATP + H2O = L-asparaginyl-tRNA(Asn) + L-glutamate + ADP + phosphate + 2 H(+). In terms of biological role, allows the formation of correctly charged Asn-tRNA(Asn) or Gln-tRNA(Gln) through the transamidation of misacylated Asp-tRNA(Asn) or Glu-tRNA(Gln) in organisms which lack either or both of asparaginyl-tRNA or glutaminyl-tRNA synthetases. The reaction takes place in the presence of glutamine and ATP through an activated phospho-Asp-tRNA(Asn) or phospho-Glu-tRNA(Gln). This is Aspartyl/glutamyl-tRNA(Asn/Gln) amidotransferase subunit C from Paracoccus denitrificans (strain Pd 1222).